Consider the following 136-residue polypeptide: Large ribosomal subunit protein uL16 (136 aa).

It belongs to the universal ribosomal protein uL16 family. Part of the 50S ribosomal subunit.

Its function is as follows. Binds 23S rRNA and is also seen to make contacts with the A and possibly P site tRNAs. In Pseudoalteromonas atlantica (strain T6c / ATCC BAA-1087), this protein is Large ribosomal subunit protein uL16.